A 340-amino-acid polypeptide reads, in one-letter code: TATA-box-binding protein (340 aa).

The segment at 1–78 (MNLNSPAVSM…HSLQGSSMQM (78 aa)) is disordered. Over residues 57–68 (PQSIQPMQSQQM) the composition is skewed to low complexity. Residues 69 to 78 (HSLQGSSMQM) show a composition bias toward polar residues. Repeat copies occupy residues 168–244 (LQNI…ARIV) and 258–335 (VQNM…YPIL).

The protein belongs to the TBP family. Component of the TFIID basal transcription factor complex, composed of TATA-box-binding protein tbp-1, and a number of TBP-associated factors (TAFs). Binds DNA as monomer.

Its subcellular location is the nucleus. Functionally, the TFIID basal transcription factor complex plays a major role in the initiation of RNA polymerase II (Pol II)-dependent transcription. TFIID recognizes and binds promoters via its subunit tbp-1, a TATA-box-binding protein, and promotes assembly of the pre-initiation complex (PIC). The TFIID complex consists of tbp-1 and TBP-associated factors (TAFs). General transcription factor that functions at the core of the TFIID complex. The chain is TATA-box-binding protein (tbp-1) from Caenorhabditis elegans.